Here is a 351-residue protein sequence, read N- to C-terminus: N6-Methyl-AMP deaminase (351 aa).

Positions 23 and 25 each coordinate Zn(2+). N(6)-methyl-AMP-binding positions include His-25, Asn-27, His-73, Ser-105 to Arg-108, Asp-147, and Gly-180. His-207 provides a ligand contact to Zn(2+). N(6)-methyl-AMP is bound by residues Glu-210, Asp-292, and Asp-293. Residue Glu-210 is the Proton donor of the active site. Asp-292 is a Zn(2+) binding site.

The protein belongs to the metallo-dependent hydrolases superfamily. Adenosine and AMP deaminases family. Monomer. Zn(2+) serves as cofactor.

The enzyme catalyses N(6)-methyl-AMP + H2O + H(+) = IMP + methylamine. In terms of biological role, catalyzes the hydrolysis of the free cytosolic methylated adenosine nucleotide N(6)-methyl-AMP (N6-mAMP) to produce inositol monophosphate (IMP) and methylamine. Is required for the catabolism of cytosolic N6-mAMP, which is derived from the degradation of mRNA containing N6-methylated adenine (m6A). The protein is N6-Methyl-AMP deaminase of Bos taurus (Bovine).